A 406-amino-acid polypeptide reads, in one-letter code: Peptide chain release factor PrfB3, chloroplastic (406 aa).

The protein belongs to the prokaryotic/mitochondrial release factor family. As to quaternary structure, interacts with PDE338.

The protein resides in the plastid. It is found in the chloroplast stroma. It localises to the chloroplast. Its function is as follows. Involved in the light- and stress-dependent regulation of stability of 3' processed petB transcripts, thus regulating cytochrome b6 accumulation, a rate-limiting step in photosynthetic electron transport. May be recruited to specifically protect petB transcripts against 3'-5' exonucleolytic attack by masking the 3' ends. Does not function as release factor. The protein is Peptide chain release factor PrfB3, chloroplastic of Arabidopsis thaliana (Mouse-ear cress).